Here is a 159-residue protein sequence, read N- to C-terminus: SsrA-binding protein (159 aa).

Positions lysine 131 to glycine 159 are disordered. Positions aspartate 137–glycine 159 are enriched in basic and acidic residues.

This sequence belongs to the SmpB family.

It localises to the cytoplasm. In terms of biological role, required for rescue of stalled ribosomes mediated by trans-translation. Binds to transfer-messenger RNA (tmRNA), required for stable association of tmRNA with ribosomes. tmRNA and SmpB together mimic tRNA shape, replacing the anticodon stem-loop with SmpB. tmRNA is encoded by the ssrA gene; the 2 termini fold to resemble tRNA(Ala) and it encodes a 'tag peptide', a short internal open reading frame. During trans-translation Ala-aminoacylated tmRNA acts like a tRNA, entering the A-site of stalled ribosomes, displacing the stalled mRNA. The ribosome then switches to translate the ORF on the tmRNA; the nascent peptide is terminated with the 'tag peptide' encoded by the tmRNA and targeted for degradation. The ribosome is freed to recommence translation, which seems to be the essential function of trans-translation. The protein is SsrA-binding protein of Rhizobium etli (strain CIAT 652).